Here is a 158-residue protein sequence, read N- to C-terminus: GTP-dependent dephospho-CoA kinase (158 aa).

GTP is bound by residues Asp35, Val36, Asp54, Lys56, Glu109, and Asp132.

The protein belongs to the GTP-dependent DPCK family.

It catalyses the reaction 3'-dephospho-CoA + GTP = GDP + CoA + H(+). It functions in the pathway cofactor biosynthesis; coenzyme A biosynthesis. Its function is as follows. Catalyzes the GTP-dependent phosphorylation of the 3'-hydroxyl group of dephosphocoenzyme A to form coenzyme A (CoA). This is GTP-dependent dephospho-CoA kinase from Methanococcus maripaludis (strain C5 / ATCC BAA-1333).